Consider the following 429-residue polypeptide: Ribosomal RNA small subunit methyltransferase B (429 aa).

Residues cysteine 254–lysine 260, aspartate 277, aspartate 303, and aspartate 322 each bind S-adenosyl-L-methionine. Cysteine 375 acts as the Nucleophile in catalysis. Residues alanine 397–aspartate 419 form a disordered region. The span at glutamate 400 to leucine 412 shows a compositional bias: polar residues.

This sequence belongs to the class I-like SAM-binding methyltransferase superfamily. RsmB/NOP family.

The protein localises to the cytoplasm. The catalysed reaction is cytidine(967) in 16S rRNA + S-adenosyl-L-methionine = 5-methylcytidine(967) in 16S rRNA + S-adenosyl-L-homocysteine + H(+). Functionally, specifically methylates the cytosine at position 967 (m5C967) of 16S rRNA. In Salmonella dublin (strain CT_02021853), this protein is Ribosomal RNA small subunit methyltransferase B.